An 803-amino-acid chain; its full sequence is Integrin beta-1 (803 aa).

A signal peptide spans methionine 1–alanine 24. The residue at position 25 (glutamine 25) is a Blocked amino end (Gln). Residues glutamine 25–aspartate 733 are Extracellular-facing. In terms of domain architecture, PSI spans aspartate 30 to proline 80. 22 disulfides stabilise this stretch: cysteine 31–cysteine 49, cysteine 39–cysteine 469, cysteine 42–cysteine 68, cysteine 52–cysteine 79, cysteine 211–cysteine 217, cysteine 265–cysteine 305, cysteine 405–cysteine 419, cysteine 439–cysteine 467, cysteine 471–cysteine 491, cysteine 482–cysteine 494, cysteine 496–cysteine 505, cysteine 507–cysteine 538, cysteine 521–cysteine 536, cysteine 530–cysteine 541, cysteine 543–cysteine 558, cysteine 560–cysteine 581, cysteine 565–cysteine 579, cysteine 573–cysteine 584, cysteine 586–cysteine 595, cysteine 597–cysteine 620, cysteine 604–cysteine 618, and cysteine 612–cysteine 623. Residues aspartate 144–leucine 382 enclose the VWFA domain. Mg(2+)-binding residues include serine 156 and serine 158. Ca(2+)-binding residues include serine 158, aspartate 161, aspartate 162, and glutamate 193. A CX3CL1-binding region spans residues cysteine 211–cysteine 217. Residue asparagine 216 is glycosylated (N-linked (GlcNAc...) asparagine). Ca(2+) contacts are provided by asparagine 248, aspartate 250, proline 252, and glutamate 253. Glutamate 253 provides a ligand contact to Mg(2+). N-linked (GlcNAc...) asparagine glycosylation occurs at asparagine 273. A CX3CL1-binding region spans residues leucine 299–tyrosine 318. 6 N-linked (GlcNAc...) asparagine glycosylation sites follow: asparagine 367, asparagine 410, asparagine 421, asparagine 433, asparagine 445, and asparagine 486. Positions isoleucine 387 to leucine 470 are interaction with TMEM182. I-EGF domains follow at residues cysteine 471–glutamate 506, cysteine 507–glutamate 559, cysteine 560–aspartate 596, and cysteine 597–glutamate 636. The N-linked (GlcNAc...) asparagine glycan is linked to asparagine 525. A glycan (N-linked (GlcNAc...) asparagine) is linked at asparagine 589. A glycan (N-linked (GlcNAc...) asparagine) is linked at asparagine 624. Disulfide bonds link cysteine 625/cysteine 635, cysteine 638/cysteine 641, cysteine 645/cysteine 696, cysteine 651/cysteine 670, cysteine 654/cysteine 666, and cysteine 704/cysteine 728. N-linked (GlcNAc...) asparagine glycosylation occurs at asparagine 674. A helical membrane pass occupies residues isoleucine 734 to tryptophan 756. Residues lysine 757–lysine 803 are Cytoplasmic-facing. Tyrosine 788 is subject to Phosphotyrosine; by Tyr-kinases.

This sequence belongs to the integrin beta chain family. Heterodimer of an alpha and a beta subunit. Beta-1 associates with either alpha-1, alpha-2, alpha-3, alpha-4, alpha-5, alpha-6, alpha-7, alpha-8, alpha-9, alpha-10, alpha-11 or alpha-V. Interacts with TMEM182 and LAMB1. Expressed on surface of embryonic fibroblasts (at protein level).

It is found in the cell membrane. Its subcellular location is the cell projection. It localises to the invadopodium membrane. The protein localises to the ruffle membrane. The protein resides in the melanosome. It is found in the lamellipodium. Its subcellular location is the ruffle. It localises to the cell junction. The protein localises to the focal adhesion. Integrins alpha-1/beta-1, alpha-2/beta-1, alpha-10/beta-1 and alpha-11/beta-1 are receptors for collagen. Integrins alpha-1/beta-1 and alpha-2/beta-1 recognize the proline-hydroxylated sequence G-F-P-G-E-R in collagen. Integrins alpha-2/beta-1, alpha-3/beta-1, alpha-4/beta-1, alpha-5/beta-1, alpha-8/beta-1, alpha-10/beta-1, alpha-11/beta-1 and alpha-V/beta-1 are receptors for fibronectin. Alpha-4/beta-1 recognizes one or more domains within the alternatively spliced CS-1 and CS-5 regions of fibronectin. Integrin alpha-5/beta-1 is a receptor for fibrinogen. Integrin alpha-1/beta-1, alpha-2/beta-1, alpha-6/beta-1 and alpha-7/beta-1 are receptors for lamimin. Integrin alpha-6/beta-1 (ITGA6:ITGB1) is present in oocytes and is involved in sperm-egg fusion. Integrin alpha-4/beta-1 is a receptor for VCAM1 and recognizes the sequence Q-I-D-S in VCAM1. Integrin alpha-9/beta-1 is a receptor for VCAM1, cytotactin and osteopontin. It recognizes the sequence A-E-I-D-G-I-E-L in cytotactin. Integrin alpha-3/beta-1 is a receptor for epiligrin, thrombospondin and CSPG4. Integrin alpha-3/beta-1 provides a docking site for FAP (seprase) at invadopodia plasma membranes in a collagen-dependent manner and hence may participate in the adhesion, formation of invadopodia and matrix degradation processes, promoting cell invasion. Alpha-3/beta-1 may mediate with LGALS3 the stimulation by CSPG4 of endothelial cells migration. Integrin alpha-V/beta-1 is a receptor for vitronectin. Beta-1 integrins recognize the sequence R-G-D in a wide array of ligands. When associated with alpha-7/beta-1 integrin, regulates cell adhesion and laminin matrix deposition. Involved in promoting endothelial cell motility and angiogenesis. Involved in osteoblast compaction through the fibronectin fibrillogenesis cell-mediated matrix assembly process and the formation of mineralized bone nodules. May be involved in up-regulation of the activity of kinases such as PKC via binding to KRT1. Together with KRT1 and RACK1, serves as a platform for SRC activation or inactivation. ITGA4:ITGB1 binds to fractalkine (CX3CL1) and may act as its coreceptor in CX3CR1-dependent fractalkine signaling. ITGA4:ITGB1 and ITGA5:ITGB1 bind to PLA2G2A via a site (site 2) which is distinct from the classical ligand-binding site (site 1) and this induces integrin conformational changes and enhanced ligand binding to site 1. ITGA5:ITGB1 acts as a receptor for fibrillin-1 (FBN1) and mediates R-G-D-dependent cell adhesion to FBN1. ITGA5:ITGB1 acts as a receptor for fibronectin FN1 and mediates R-G-D-dependent cell adhesion to FN1. ITGA5:ITGB1 is a receptor for IL1B and binding is essential for IL1B signaling. ITGA5:ITGB3 is a receptor for soluble CD40LG and is required for CD40/CD40LG signaling. Plays an important role in myoblast differentiation and fusion during skeletal myogenesis. The polypeptide is Integrin beta-1 (ITGB1) (Gallus gallus (Chicken)).